Reading from the N-terminus, the 607-residue chain is Isocitrate dehydrogenase kinase/phosphatase (607 aa).

ATP contacts are provided by residues 328-334 (APGIKGL) and lysine 349. Aspartate 384 is a catalytic residue.

The protein belongs to the AceK family.

Its subcellular location is the cytoplasm. It catalyses the reaction L-seryl-[isocitrate dehydrogenase] + ATP = O-phospho-L-seryl-[isocitrate dehydrogenase] + ADP + H(+). Its function is as follows. Bifunctional enzyme which can phosphorylate or dephosphorylate isocitrate dehydrogenase (IDH) on a specific serine residue. This is a regulatory mechanism which enables bacteria to bypass the Krebs cycle via the glyoxylate shunt in response to the source of carbon. When bacteria are grown on glucose, IDH is fully active and unphosphorylated, but when grown on acetate or ethanol, the activity of IDH declines drastically concomitant with its phosphorylation. This is Isocitrate dehydrogenase kinase/phosphatase from Cupriavidus metallidurans (strain ATCC 43123 / DSM 2839 / NBRC 102507 / CH34) (Ralstonia metallidurans).